The chain runs to 669 residues: 5-taurinomethyluridine-[tRNA] synthase subunit MTO1, mitochondrial (669 aa).

The N-terminal 25 residues, 1–25 (MFLLRGRGHWAAASLGRRLPLRRLR), are a transit peptide targeting the mitochondrion. Residues 42-47 (GGGHAG), Val-154, Ser-217, and Gln-406 contribute to the FAD site. Lys-507 carries the post-translational modification N6-methyllysine.

It belongs to the MnmG family. In terms of assembly, homodimer; forms a dimer in the presence of potassium. Interacts with GTPBP3; forms the GTPBP3-MTO1 complex composed of homodimers of GTPBP3 and MTO1. It depends on FAD as a cofactor. Ubiquitously expressed in various tissues, but with markedly elevated expression in tissues of high metabolic rates.

The protein localises to the mitochondrion. It catalyses the reaction 5,10-methylenetetrahydrofolate + uridine(34) in tRNA + taurine + GTP + A + H2O = 5-taurinomethyluridine(34) in tRNA + 7,8-dihydrofolate + GDP + AH2 + phosphate + H(+). Component of the GTPBP3-MTO1 complex that catalyzes the 5-taurinomethyluridine (taum(5)U) modification at the 34th wobble position (U34) of mitochondrial tRNAs (mt-tRNAs), which plays a role in mt-tRNA decoding and mitochondrial translation. Taum(5)U formation on mammalian mt-tRNA requires the presence of both GTPBP3-mediated GTPase activity and MTO1 catalytic activity. In Mus musculus (Mouse), this protein is 5-taurinomethyluridine-[tRNA] synthase subunit MTO1, mitochondrial.